Reading from the N-terminus, the 557-residue chain is Probable protein kinase UbiB (557 aa).

Positions 121–509 constitute a Protein kinase domain; it reads SFDTVPLASA…RKLQTRVVTA (389 aa). Residues 127 to 135 and Lys-154 each bind ATP; that span reads LASASIAQV. Asp-289 serves as the catalytic Proton acceptor. Transmembrane regions (helical) follow at residues 506 to 526 and 535 to 555; these read VVTA…YGLH and VPVW…VAWL.

Belongs to the ABC1 family. UbiB subfamily.

Its subcellular location is the cell inner membrane. It participates in cofactor biosynthesis; ubiquinone biosynthesis [regulation]. Its function is as follows. Is probably a protein kinase regulator of UbiI activity which is involved in aerobic coenzyme Q (ubiquinone) biosynthesis. The sequence is that of Probable protein kinase UbiB from Xanthomonas oryzae pv. oryzae (strain MAFF 311018).